The following is an 837-amino-acid chain: Periplasmic nitrate reductase (837 aa).

The tat-type signal signal peptide spans 1–31 (MKLNRRDFIKANAAAAAISAAGLSVPGAAVA). Residues 37–93 (IRWDKAACRFCGTGCGVLVGTQDGRVVATQGDPDAPVNRGLNCIKGYFLSKIMYGAD) form the 4Fe-4S Mo/W bis-MGD-type domain. [4Fe-4S] cluster contacts are provided by C44, C47, C51, and C79. Residues K81, Q148, N173, C177, 210 to 217 (WGSNMAEM), 241 to 245 (STFEH), and 260 to 262 (QTD) contribute to the Mo-bis(molybdopterin guanine dinucleotide) site. The tract at residues 308-329 (EKNATSNGYPDADGKPKGDTGK) is disordered. Residues 319–329 (ADGKPKGDTGK) show a composition bias toward basic and acidic residues. Residues M381, Q385, N491, 517–518 (SD), K540, D567, and 727–736 (TGRVLEHWHT) each bind Mo-bis(molybdopterin guanine dinucleotide). Position 803 (F803) interacts with substrate. Positions 811 and 828 each coordinate Mo-bis(molybdopterin guanine dinucleotide).

This sequence belongs to the prokaryotic molybdopterin-containing oxidoreductase family. NasA/NapA/NarB subfamily. As to quaternary structure, component of the periplasmic nitrate reductase NapAB complex composed of NapA and NapB. [4Fe-4S] cluster is required as a cofactor. Mo-bis(molybdopterin guanine dinucleotide) serves as cofactor. Predicted to be exported by the Tat system. The position of the signal peptide cleavage has not been experimentally proven.

It localises to the periplasm. It catalyses the reaction 2 Fe(II)-[cytochrome] + nitrate + 2 H(+) = 2 Fe(III)-[cytochrome] + nitrite + H2O. Catalytic subunit of the periplasmic nitrate reductase complex NapAB. Receives electrons from NapB and catalyzes the reduction of nitrate to nitrite. The chain is Periplasmic nitrate reductase from Dechloromonas aromatica (strain RCB).